The following is a 343-amino-acid chain: Inositol 2-dehydrogenase (343 aa).

Belongs to the Gfo/Idh/MocA family. As to quaternary structure, homotetramer.

The enzyme catalyses myo-inositol + NAD(+) = scyllo-inosose + NADH + H(+). Its function is as follows. Involved in the oxidation of myo-inositol (MI) to 2-keto-myo-inositol (2KMI or 2-inosose). The chain is Inositol 2-dehydrogenase from Streptomyces avermitilis (strain ATCC 31267 / DSM 46492 / JCM 5070 / NBRC 14893 / NCIMB 12804 / NRRL 8165 / MA-4680).